The chain runs to 241 residues: Enterotoxin type H (241 aa).

The N-terminal stretch at 1–24 (MINKIKILFSFLALLLSFTSYAKA) is a signal peptide. A disulfide bond links cysteine 106 and cysteine 116. Aspartate 191, histidine 230, and aspartate 232 together coordinate Zn(2+).

The protein belongs to the staphylococcal/streptococcal toxin family. As to quaternary structure, interacts with host MHC class II molecules composed of alpha/HLA-DRA and beta/HLA-DRB1 chains. Interacts with host TCR alpha-chain TRAV27. The cofactor is Zn(2+).

The protein localises to the secreted. Its function is as follows. Staphylococcal enterotoxin that activates the host immune system by binding as unprocessed molecules to major histocompatibility (MHC) complex class II and T-cell receptor (TCR) molecules via their alpha domain, in particular TRAV27. In turn, this ternary complex activates a large number of T-lymphocytes initiating a systemic release of pro-inflammatory cytokines. Also causes the intoxication staphylococcal food poisoning syndrome. The illness characterized by high fever, hypotension, diarrhea, shock, and in some cases death. The chain is Enterotoxin type H (entH) from Staphylococcus aureus.